Here is a 75-residue protein sequence, read N- to C-terminus: UPF0235 protein Mvan_2846 (75 aa).

This sequence belongs to the UPF0235 family.

This chain is UPF0235 protein Mvan_2846, found in Mycolicibacterium vanbaalenii (strain DSM 7251 / JCM 13017 / BCRC 16820 / KCTC 9966 / NRRL B-24157 / PYR-1) (Mycobacterium vanbaalenii).